The following is an 898-amino-acid chain: Interleukin enhancer-binding factor 3-B (898 aa).

The DZF domain maps to 5–379 (RIFLNDDRHV…ALKRPIEEDG (375 aa)). Disordered stretches follow at residues 52–87 (QEKD…NPTR), 374–403 (PIEE…PPQA), 468–529 (LPTG…VMEL), 627–651 (PPPQ…RGGF), and 711–799 (GEGY…QGAA). The segment covering 61–71 (ENPEPEETETT) has biased composition (acidic residues). 2 stretches are compositionally biased toward basic and acidic residues: residues 72–81 (EEGKDSEAKT) and 374–384 (PIEEDGEDKSP). The Bipartite nuclear localization signal signature appears at 372–390 (KRPIEEDGEDKSPSKKKKK). A DRBM 1 domain is found at 399–468 (EPPQAMNALM…AVKVLQDMGL (70 aa)). Residues 474–483 (EKEESVDESE) show a composition bias toward acidic residues. Positions 489-513 (QTPSQTADSEQADSSAGDQSESGKQ) are enriched in polar residues. The 67-residue stretch at 521 to 587 (HGKNPVMELN…ALSALEKLFP (67 aa)) folds into the DRBM 2 domain. Residues 637–651 (RGGMNRGRGRGRGGF) are compositionally biased toward gly residues. Pro residues predominate over residues 717-747 (PTPPKPFVKKPPPPQQQQQPPPQHASNPPKP). The span at 749-782 (YNQGYQGHQGGQQQQQPQQQQQQTYNQNQYSNYG) shows a compositional bias: low complexity.

A component of a ybx2/frgy2-containing mRNA-ribonucleoprotein (mRNP) complex. Also a component of the CCAAT box transcription factor (CBTF) complex. Phosphorylated. Phosphorylation affects nuclear translocation. Post-translationally, methylated by protein arginine N-methyltransferase 1 (prmt1b) in the RGG-rich domain. Methylation decreases DNA-binding and thereby decreases transcription of the gata2 gene, but does not regulate dsRNA binding or subcellular localization.

It localises to the nucleus. Its subcellular location is the cytoplasm. In terms of biological role, RNA-binding protein that plays an essential role in the biogenesis of circular RNAs (circRNAs) which are produced by back-splicing circularization of pre-mRNAs. Within the nucleus, promotes circRNAs processing by stabilizing the regulatory elements residing in the flanking introns of the circularized exons. Plays thereby a role in the back-splicing of a subset of circRNAs. As a consequence, participates in a wide range of transcriptional and post-transcriptional processes. Binds to poly-U elements and AU-rich elements (AREs) in the 3'-UTR of target mRNAs. Upon viral infection, ILF3 accumulates in the cytoplasm and participates in the innate antiviral response. Mechanistically, ILF3 becomes phosphorylated and activated by the double-stranded RNA-activated protein kinase/PKR which releases ILF3 from cellular mature circRNAs. In turn, unbound ILF3 molecules are able to interact with and thus inhibit viral mRNAs. Has a cytoplasmic role early in development as part of a ribonucleoprotein (mRNP) complex which may regulate mRNA transport and/or translation. Following nuclear localization at the mid-blastula transition, acts as a transcription factor and binds the 5'-CCAAT-3' promoter sequence to regulate transcription of the gata2 gene as a subunit of the CCAAT box transcription factor (CBTF). Its role as an mRNP component negatively regulates its activity as a transcription factor by precluding its nuclear localization. The protein is Interleukin enhancer-binding factor 3-B (ilf3-b) of Xenopus laevis (African clawed frog).